The primary structure comprises 445 residues: tRNA modification GTPase MnmE (445 aa).

Positions 20, 79, and 119 each coordinate (6S)-5-formyl-5,6,7,8-tetrahydrofolate. Positions 215 to 371 constitute a TrmE-type G domain; sequence GLKLAIIGPP…ILKNIENIAE (157 aa). Asparagine 225 is a binding site for K(+). GTP is bound by residues 225 to 230, 244 to 250, and 269 to 272; these read NVGKSS, SNIAGTT, and DTAG. Serine 229 is a binding site for Mg(2+). Residues serine 244, isoleucine 246, and threonine 249 each contribute to the K(+) site. Mg(2+) is bound at residue threonine 250. A (6S)-5-formyl-5,6,7,8-tetrahydrofolate-binding site is contributed by lysine 445.

It belongs to the TRAFAC class TrmE-Era-EngA-EngB-Septin-like GTPase superfamily. TrmE GTPase family. Homodimer. Heterotetramer of two MnmE and two MnmG subunits. K(+) is required as a cofactor.

Its subcellular location is the cytoplasm. Exhibits a very high intrinsic GTPase hydrolysis rate. Involved in the addition of a carboxymethylaminomethyl (cmnm) group at the wobble position (U34) of certain tRNAs, forming tRNA-cmnm(5)s(2)U34. The chain is tRNA modification GTPase MnmE from Rickettsia rickettsii (strain Iowa).